The primary structure comprises 232 residues: Two-component response regulator ORR4 (232 aa).

One can recognise a Response regulatory domain in the interval 11-147; it reads HVLAVDDSLI…DMKKLKSHLL (137 aa). A 4-aspartylphosphate modification is found at Asp80. Disordered regions lie at residues 153–174 and 202–232; these read LPMA…AASA and AAAM…AVET. Positions 209–232 are enriched in polar residues; sequence VISSPDQRTKPRLSSTSSGLAVET.

It belongs to the ARR family. Type-A subfamily. Post-translationally, two-component system major event consists of a His-to-Asp phosphorelay between a sensor histidine kinase (HK) and a response regulator (RR). In plants, the His-to-Asp phosphorelay involves an additional intermediate named Histidine-containing phosphotransfer protein (HPt). This multistep phosphorelay consists of a His-Asp-His-Asp sequential transfer of a phosphate group between first a His and an Asp of the HK protein, followed by the transfer to a conserved His of the HPt protein and finally the transfer to an Asp in the receiver domain of the RR protein. As to expression, expressed in mature leaves and flowers, and at low levels in roots and shoots.

Its function is as follows. Functions as a response regulator involved in His-to-Asp phosphorelay signal transduction system. Phosphorylation of the Asp residue in the receiver domain activates the ability of the protein to promote the transcription of target genes. Type-A response regulators seem to act as negative regulators of the cytokinin signaling. This Oryza sativa subsp. indica (Rice) protein is Two-component response regulator ORR4.